The sequence spans 39 residues: Cytochrome b559 subunit beta (39 aa).

A helical transmembrane segment spans residues 14-30 (WLAVHGLAVPTVSFLGS). A heme-binding site is contributed by His-18.

This sequence belongs to the PsbE/PsbF family. Heterodimer of an alpha subunit and a beta subunit. PSII is composed of 1 copy each of membrane proteins PsbA, PsbB, PsbC, PsbD, PsbE, PsbF, PsbH, PsbI, PsbJ, PsbK, PsbL, PsbM, PsbT, PsbX, PsbY, PsbZ, Psb30/Ycf12, at least 3 peripheral proteins of the oxygen-evolving complex and a large number of cofactors. It forms dimeric complexes. The cofactor is heme b.

The protein resides in the plastid. The protein localises to the chloroplast thylakoid membrane. Functionally, this b-type cytochrome is tightly associated with the reaction center of photosystem II (PSII). PSII is a light-driven water:plastoquinone oxidoreductase that uses light energy to abstract electrons from H(2)O, generating O(2) and a proton gradient subsequently used for ATP formation. It consists of a core antenna complex that captures photons, and an electron transfer chain that converts photonic excitation into a charge separation. In Lotus japonicus (Lotus corniculatus var. japonicus), this protein is Cytochrome b559 subunit beta.